The following is a 197-amino-acid chain: Nucleoside triphosphate pyrophosphatase (197 aa).

D75 acts as the Proton acceptor in catalysis.

Belongs to the Maf family. A divalent metal cation serves as cofactor.

The protein localises to the cytoplasm. It catalyses the reaction a ribonucleoside 5'-triphosphate + H2O = a ribonucleoside 5'-phosphate + diphosphate + H(+). It carries out the reaction a 2'-deoxyribonucleoside 5'-triphosphate + H2O = a 2'-deoxyribonucleoside 5'-phosphate + diphosphate + H(+). Functionally, nucleoside triphosphate pyrophosphatase. May have a dual role in cell division arrest and in preventing the incorporation of modified nucleotides into cellular nucleic acids. The polypeptide is Nucleoside triphosphate pyrophosphatase (Haemophilus ducreyi (strain 35000HP / ATCC 700724)).